The chain runs to 736 residues: Oxysterol-binding protein-related protein 9 (736 aa).

Ala2 carries the N-acetylalanine modification. In terms of domain architecture, PH spans 2–99 (ASIVEGPLSK…WIHALEETIL (98 aa)). Positions 209 to 368 (LEPVISTMPS…RDDDGEAGSV (160 aa)) are disordered. Residues 253-274 (TPTPNSTGSGNSPPSSSLTPPS) show a composition bias toward low complexity. Phosphoserine occurs at positions 306, 324, 325, 326, and 329. Polar residues-rich tracts occupy residues 314–329 (SSGSASVLTHSSSGNS) and 336–348 (TESLNSSMSNGTS). Ser611 bears the Phosphoserine mark.

The protein belongs to the OSBP family. As to quaternary structure, heterodimer with OSBPL11. Interacts with OSBPL10.

It is found in the late endosome membrane. It localises to the golgi apparatus. The protein localises to the trans-Golgi network membrane. The catalysed reaction is a 1,2-diacyl-sn-glycero-3-phospho-(1D-myo-inositol 4-phosphate)(out) + a 1,2-diacyl-sn-glycero-3-phospho-L-serine(in) = a 1,2-diacyl-sn-glycero-3-phospho-(1D-myo-inositol 4-phosphate)(in) + a 1,2-diacyl-sn-glycero-3-phospho-L-serine(out). In terms of biological role, interacts with OSBPL11 to function as lipid transfer proteins. Together they form a heterodimer that localizes at the ER-trans-Golgi membrane contact sites, and exchanges phosphatidylserine (1,2-diacyl-sn-glycero-3-phospho-L-serine, PS) for phosphatidylinositol-4-phosphate (1,2-diacyl-sn-glycero-3-phospho-(1D-myo-inositol 4-phosphate), PI(4)P) between the two organelles, a step that is critical for sphingomyelin synthesis in the Golgi complex. The sequence is that of Oxysterol-binding protein-related protein 9 (Osbpl9) from Mus musculus (Mouse).